The chain runs to 182 residues: NADH-dependent FAD reductase (182 aa).

NAD(+) is bound at residue aspartate 16. Residues 47-48 (NS), 62-64 (CVG), and histidine 98 each bind FAD. NAD(+) is bound at residue histidine 143.

This sequence belongs to the non-flavoprotein flavin reductase family. As to quaternary structure, homodimer.

It catalyses the reaction FADH2 + NAD(+) = FAD + NADH + 2 H(+). Its pathway is antibiotic biosynthesis. The SgcE6-SgcC hydroxylation activity decreases in the presence of excess FAD. Its function is as follows. Reductase component of a two-component system involved in the biosynthesis of the enediyne antitumor antibiotic C-1027. SgcE6 provides the FADH(2) required by both the halogenase SgcC3 and the monooxygenase SgcC through free diffusion. Accepts only NADH and FAD as substrates. In Streptomyces globisporus, this protein is NADH-dependent FAD reductase.